The following is a 290-amino-acid chain: Mitochondrial dicarboxylate carrier (290 aa).

3 Solcar repeats span residues 6–90 (TKRL…VKKQ), 101–188 (QKAL…IKQT), and 197–281 (DNLQ…LRLK). The next 3 membrane-spanning stretches (helical) occupy residues 12–32 (WYFG…LDLL), 65–84 (GVSA…FGIY), and 103–123 (ALLA…GDLV). Lys159 bears the N6-acetyllysine mark. Transmembrane regions (helical) follow at residues 163–182 (GATM…LSFY), 203–223 (FASS…LDVM), and 256–276 (GFIP…IFFE).

It belongs to the mitochondrial carrier (TC 2.A.29) family.

Its subcellular location is the mitochondrion inner membrane. The catalysed reaction is (S)-malate(in) + phosphate(out) = (S)-malate(out) + phosphate(in). It catalyses the reaction malonate(out) + (S)-malate(in) = malonate(in) + (S)-malate(out). The enzyme catalyses (S)-malate(in) + succinate(out) = (S)-malate(out) + succinate(in). It carries out the reaction (S)-malate(in) + sulfate(out) = (S)-malate(out) + sulfate(in). The catalysed reaction is 2 thiosulfate(out) + (S)-malate(in) = 2 thiosulfate(in) + (S)-malate(out). It catalyses the reaction malonate(out) + phosphate(in) = malonate(in) + phosphate(out). The enzyme catalyses succinate(out) + phosphate(in) = succinate(in) + phosphate(out). It carries out the reaction sulfate(out) + phosphate(in) = sulfate(in) + phosphate(out). The catalysed reaction is 2 thiosulfate(out) + phosphate(in) = 2 thiosulfate(in) + phosphate(out). It catalyses the reaction malonate(out) + succinate(in) = malonate(in) + succinate(out). Catalyzes the electroneutral exchange or flux of physiologically important metabolites such as dicarboxylates (malonate, malate, succinate), inorganic sulfur-containing anions, and phosphate, across mitochondrial inner membrane. Plays an important role in gluconeogenesis, fatty acid metabolism, urea synthesis, and sulfur metabolism, by supplying the substrates for the different metabolic processes. In Caenorhabditis elegans, this protein is Mitochondrial dicarboxylate carrier.